The following is a 296-amino-acid chain: Cytidine deaminase (296 aa).

CMP/dCMP-type deaminase domains follow at residues 48–168 (DVDA…FGPV) and 187–296 (QNVN…FIEE). Residue 89–91 (NME) coordinates substrate. Zn(2+) is bound at residue histidine 102. Glutamate 104 (proton donor) is an active-site residue. Positions 129 and 132 each coordinate Zn(2+).

Belongs to the cytidine and deoxycytidylate deaminase family. As to quaternary structure, homodimer. Zn(2+) is required as a cofactor.

It catalyses the reaction cytidine + H2O + H(+) = uridine + NH4(+). The enzyme catalyses 2'-deoxycytidine + H2O + H(+) = 2'-deoxyuridine + NH4(+). In terms of biological role, this enzyme scavenges exogenous and endogenous cytidine and 2'-deoxycytidine for UMP synthesis. The polypeptide is Cytidine deaminase (Pectobacterium atrosepticum (strain SCRI 1043 / ATCC BAA-672) (Erwinia carotovora subsp. atroseptica)).